A 366-amino-acid chain; its full sequence is Alanine racemase (366 aa).

Residue Lys40 is the Proton acceptor; specific for D-alanine of the active site. Lys40 carries the post-translational modification N6-(pyridoxal phosphate)lysine. Residue Arg136 coordinates substrate. Tyr263 serves as the catalytic Proton acceptor; specific for L-alanine. Met310 is a substrate binding site.

Belongs to the alanine racemase family. The cofactor is pyridoxal 5'-phosphate.

It carries out the reaction L-alanine = D-alanine. The protein operates within amino-acid biosynthesis; D-alanine biosynthesis; D-alanine from L-alanine: step 1/1. Functionally, catalyzes the interconversion of L-alanine and D-alanine. May also act on other amino acids. In Streptococcus pyogenes serotype M6 (strain ATCC BAA-946 / MGAS10394), this protein is Alanine racemase (alr).